The sequence spans 392 residues: N-acetylneuraminate epimerase (392 aa).

A signal peptide spans 1–35 (MTQLYPQYKKQLTTKIVLFSALSLLMMASLPNTYA). 7 Kelch repeats span residues 56–100 (SLYV…VVLA), 102–155 (KLYV…TTLD), 157–192 (SQAV…AVIN), 193–238 (AYFN…SRMD), 241–290 (LILI…LAGA), 312–361 (KQFN…QGPD), and 363–392 (VILI…LHIE). Glutamate 247 (proton acceptor) is an active-site residue.

Belongs to the NanM family. Homodimer.

The protein resides in the periplasm. The enzyme catalyses N-acetyl-alpha-neuraminate = N-acetyl-beta-neuraminate. Converts alpha-N-acetylneuranimic acid (Neu5Ac) to the beta-anomer, accelerating the equilibrium between the alpha- and beta-anomers. Probably facilitates sialidase-negative bacteria to compete successfully for limited amounts of extracellular Neu5Ac, which is likely taken up in the beta-anomer. In addition, the rapid removal of sialic acid from solution might be advantageous to the bacterium to damp down host responses. The protein is N-acetylneuraminate epimerase of Yersinia pseudotuberculosis serotype O:1b (strain IP 31758).